Consider the following 230-residue polypeptide: 5'-methylthioadenosine/S-adenosylhomocysteine nucleosidase (230 aa).

E12 functions as the Proton acceptor in the catalytic mechanism. Residues G78, M153, and 174-175 (ME) contribute to the substrate site. The Proton donor role is filled by D198.

This sequence belongs to the PNP/UDP phosphorylase family. MtnN subfamily.

It catalyses the reaction S-adenosyl-L-homocysteine + H2O = S-(5-deoxy-D-ribos-5-yl)-L-homocysteine + adenine. The enzyme catalyses S-methyl-5'-thioadenosine + H2O = 5-(methylsulfanyl)-D-ribose + adenine. It carries out the reaction 5'-deoxyadenosine + H2O = 5-deoxy-D-ribose + adenine. It functions in the pathway amino-acid biosynthesis; L-methionine biosynthesis via salvage pathway; S-methyl-5-thio-alpha-D-ribose 1-phosphate from S-methyl-5'-thioadenosine (hydrolase route): step 1/2. Catalyzes the irreversible cleavage of the glycosidic bond in both 5'-methylthioadenosine (MTA) and S-adenosylhomocysteine (SAH/AdoHcy) to adenine and the corresponding thioribose, 5'-methylthioribose and S-ribosylhomocysteine, respectively. Also cleaves 5'-deoxyadenosine, a toxic by-product of radical S-adenosylmethionine (SAM) enzymes, into 5-deoxyribose and adenine. This Tolumonas auensis (strain DSM 9187 / NBRC 110442 / TA 4) protein is 5'-methylthioadenosine/S-adenosylhomocysteine nucleosidase.